Reading from the N-terminus, the 245-residue chain is Orotidine 5'-phosphate decarboxylase (245 aa).

Substrate is bound by residues Asp22, Lys44, 71–80 (DLKFHDIPNT), Thr131, Arg192, Gln201, Gly221, and Arg222. Residue Lys73 is the Proton donor of the active site.

It belongs to the OMP decarboxylase family. Type 1 subfamily. Homodimer.

It carries out the reaction orotidine 5'-phosphate + H(+) = UMP + CO2. It functions in the pathway pyrimidine metabolism; UMP biosynthesis via de novo pathway; UMP from orotate: step 2/2. In terms of biological role, catalyzes the decarboxylation of orotidine 5'-monophosphate (OMP) to uridine 5'-monophosphate (UMP). This is Orotidine 5'-phosphate decarboxylase from Escherichia coli O45:K1 (strain S88 / ExPEC).